Consider the following 279-residue polypeptide: Digeranylgeranylglyceryl phosphate synthase (279 aa).

6 consecutive transmembrane segments (helical) span residues 27-47, 90-110, 127-147, 199-219, 222-242, and 259-279; these read LIAT…VALI, FVGG…IAII, VLGN…GGAF, TGIF…LPFG, WGLF…FGAF, and TSIL…AAVI.

It belongs to the UbiA prenyltransferase family. DGGGP synthase subfamily. Requires Mg(2+) as cofactor.

It is found in the cell membrane. The catalysed reaction is sn-3-O-(geranylgeranyl)glycerol 1-phosphate + (2E,6E,10E)-geranylgeranyl diphosphate = 2,3-bis-O-(geranylgeranyl)-sn-glycerol 1-phosphate + diphosphate. Its pathway is membrane lipid metabolism; glycerophospholipid metabolism. Functionally, prenyltransferase that catalyzes the transfer of the geranylgeranyl moiety of geranylgeranyl diphosphate (GGPP) to the C2 hydroxyl of (S)-3-O-geranylgeranylglyceryl phosphate (GGGP). This reaction is the second ether-bond-formation step in the biosynthesis of archaeal membrane lipids. In Methanoculleus marisnigri (strain ATCC 35101 / DSM 1498 / JR1), this protein is Digeranylgeranylglyceryl phosphate synthase.